A 435-amino-acid polypeptide reads, in one-letter code: MLDIKVIRENLDWSKKKLATRGIKPEELDELVEIDTKRRKDLTMSEQLKAKRNDVSKQIAEKKRNKEDASDAIAEMREVGKEIKKLDKEVDELTEKQNYILLRLPNFPADSDPIGPDDSYNEEVRKWEEPTKFDFKPKAHWDLGTDLGILDWDRASKVSGARFVYYIGAGALLERAVFNFFLDENTKDGYTEIIPPYLVNDASMQGTGQFPKFHEDVYTIVDNDDPDKPRDLTLIPTAEVPLVNYFRNEIIHENKLPINVTAMSPAFRSEAGSAGRDTRGLIRMHEFRKVEMVKICKPDESWDELEKLTHNAEHLLQKLGLPYHVVALSTGDASFTSAKTYDLEVWMPAQDKYREISSCSNCTDFQARRAQIRYRDEDGKLHLAHTLNGSGLAVGRCVAAILENYQNEDGSVTVPDVLVPYMNGMKKITKESGLI.

L-serine is bound at residue 237–239 (TAE). 268 to 270 (RSE) provides a ligand contact to ATP. Glutamate 291 is a binding site for L-serine. Residue 355–358 (EISS) coordinates ATP. Residue serine 390 coordinates L-serine.

Belongs to the class-II aminoacyl-tRNA synthetase family. Type-1 seryl-tRNA synthetase subfamily. Homodimer. The tRNA molecule binds across the dimer.

Its subcellular location is the cytoplasm. It carries out the reaction tRNA(Ser) + L-serine + ATP = L-seryl-tRNA(Ser) + AMP + diphosphate + H(+). The catalysed reaction is tRNA(Sec) + L-serine + ATP = L-seryl-tRNA(Sec) + AMP + diphosphate + H(+). Its pathway is aminoacyl-tRNA biosynthesis; selenocysteinyl-tRNA(Sec) biosynthesis; L-seryl-tRNA(Sec) from L-serine and tRNA(Sec): step 1/1. Its function is as follows. Catalyzes the attachment of serine to tRNA(Ser). Is also able to aminoacylate tRNA(Sec) with serine, to form the misacylated tRNA L-seryl-tRNA(Sec), which will be further converted into selenocysteinyl-tRNA(Sec). The sequence is that of Serine--tRNA ligase from Lactobacillus acidophilus (strain ATCC 700396 / NCK56 / N2 / NCFM).